Consider the following 262-residue polypeptide: Flap endonuclease Xni (262 aa).

Position 105 (Asp105) interacts with Mg(2+). Residues 164 to 251 (SQFLDLMALA…NINLKDFRAN (88 aa)) enclose the 5'-3' exonuclease domain. K(+) is bound by residues Leu172, Ala173, Pro181, Ile183, and Ile186. Residues 185-190 (GIGPKS) are interaction with DNA.

The protein belongs to the Xni family. The cofactor is Mg(2+). K(+) is required as a cofactor.

Has flap endonuclease activity. During DNA replication, flap endonucleases cleave the 5'-overhanging flap structure that is generated by displacement synthesis when DNA polymerase encounters the 5'-end of a downstream Okazaki fragment. This chain is Flap endonuclease Xni, found in Shewanella putrefaciens (strain CN-32 / ATCC BAA-453).